Here is a 249-residue protein sequence, read N- to C-terminus: Pleckstrin homology domain-containing family F member 2 (249 aa).

Positions 35–131 (VLIGEGVLTK…WMNHINKCVS (97 aa)) constitute a PH domain. The FYVE-type zinc-finger motif lies at 152-212 (DSEATVCMRC…ICDSCYDLLS (61 aa)). Zn(2+)-binding residues include Cys158, Cys161, Cys175, Cys178, Cys183, Cys186, Cys204, and Cys207. A compositionally biased stretch (polar residues) spans 219 to 232 (CQSTRSDSYSQSPK). Residues 219–249 (CQSTRSDSYSQSPKSSLNDASDDDDDEDSSD) are disordered. Acidic residues predominate over residues 238 to 249 (ASDDDDDEDSSD).

Its subcellular location is the early endosome membrane. It localises to the endoplasmic reticulum. In terms of biological role, may play a role in early endosome fusion upstream of RAB5, hence regulating receptor trafficking and fluid-phase transport. Enhances cellular sensitivity to TNF-induced apoptosis. This is Pleckstrin homology domain-containing family F member 2 (PLEKHF2) from Gallus gallus (Chicken).